The primary structure comprises 152 residues: MMKKIDVKILDPRVRKEFPLPTYATSGSAGLDLRACLDDAVELAPGDTTLVPTGLAIHIADPSLAAMMLPRSGLGHKHGIVLGNLVGLIDSDYQGQLMISVWNRGQDSFTIQPGERIAQMIFVPVVQAEFNLVEDFDATDRGEGGFGHSGRQ.

Residues 71 to 73 (RSG), N84, 88 to 90 (LID), and M98 contribute to the substrate site.

The protein belongs to the dUTPase family. The cofactor is Mg(2+).

The catalysed reaction is dUTP + H2O = dUMP + diphosphate + H(+). Its pathway is pyrimidine metabolism; dUMP biosynthesis; dUMP from dCTP (dUTP route): step 2/2. Functionally, this enzyme is involved in nucleotide metabolism: it produces dUMP, the immediate precursor of thymidine nucleotides and it decreases the intracellular concentration of dUTP so that uracil cannot be incorporated into DNA. This chain is Deoxyuridine 5'-triphosphate nucleotidohydrolase, found in Shigella flexneri.